Reading from the N-terminus, the 116-residue chain is Large ribosomal subunit protein eL18 (116 aa).

It belongs to the eukaryotic ribosomal protein eL18 family. In terms of assembly, part of the 50S ribosomal subunit. Interacts weakly with proteins L4 and L15. Has been cross-linked to L4.

Stabilizes the tertiary rRNA structure within the 23S rRNA domain (domain II) to which it binds. The polypeptide is Large ribosomal subunit protein eL18 (rpl18e) (Haloarcula marismortui (strain ATCC 43049 / DSM 3752 / JCM 8966 / VKM B-1809) (Halobacterium marismortui)).